The sequence spans 206 residues: Musculin (206 aa).

The disordered stretch occupies residues 1 to 115; the sequence is MSTGSVSDPE…QSQRNAANAR (115 aa). The segment covering 46 to 56 has biased composition (acidic residues); the sequence is SAEEEDPDGEE. Positions 71 to 76 match the Nuclear localization signal motif; it reads KRKRPR. Residues 78–92 show a composition bias toward gly residues; that stretch reads AGGGGAGGSAGGGGK. The span at 93–102 shows a compositional bias: low complexity; it reads KPLPAKGSAA. The bHLH domain occupies 107-159; the sequence is SQRNAANARERARMRVLSKAFSRLKTSLPWVPPDTKLSKLDTLRLASSYIAHL.

Efficient DNA binding requires dimerization with another bHLH protein. Binds DNA as a homodimer or a heterodimer. Forms a heterodimer with TCF3. In terms of tissue distribution, expressed in lymphoid tissues, B-cell lines and activated B-cells.

It is found in the nucleus. In terms of biological role, transcription repressor capable of inhibiting the transactivation capability of TCF3/E47. May play a role in regulating antigen-dependent B-cell differentiation. The polypeptide is Musculin (MSC) (Homo sapiens (Human)).